A 125-amino-acid polypeptide reads, in one-letter code: Egg cell-secreted protein 1.2 (125 aa).

Positions 1–22 (MASNTSFLFATIAILLVLNISG) are cleaved as a signal peptide.

The protein belongs to the plant egg cell-secreted peptide family. As to expression, restricted to female reproductive tissues, specifically accumulating in storage vesicles of the unfertilized egg cell.

It localises to the cytoplasmic vesicle. The protein localises to the secreted. Involved in the regulation of gamete interactions during the double fertilization and to prevent multiple-pollen tube attraction; mediates the redistribution of the gamete fusogen HAP2/GCS1 to the cell surface after secretion upon sperm arrival. This Arabidopsis thaliana (Mouse-ear cress) protein is Egg cell-secreted protein 1.2 (EC1.2).